We begin with the raw amino-acid sequence, 387 residues long: MKKLLLLLGLVALSECLYKVPLVKKKSLRQNLIENGLLKDFLAKHNVNPASKYFPTEAATELADQPLVNYMDMEYFGTIGIGTPPQEFTVIFDTGSSNLWVPSVYCSSPACSNHNRFNPQKSSTFQSTSQTLSIAYGTGSMTGVLGYDTVQVAGIADTNQIFGLSQTEPGSFLYYSPFDGILGLAYPNIASSGATPVFDNMWNQGLVSQDLFSVYLSSNDQSGSVVIFGGIDSSYYTGNLNWVPLSSEGYWQITVDSITMNGQAIACSGSCQAIVDTGTSLLSGPNNAIANIQKSIGASQNANGQMVVSCSSIQSLPDIVFTINGIQYPLPASAYILQNQQDCTSGFQGMDIPTPSGELWILGDVFIRQYFAVFDRGNNRVGLAPVA.

The N-terminal stretch at 1 to 16 is a signal peptide; it reads MKKLLLLLGLVALSEC. The propeptide at 17–61 is activation peptide; that stretch reads LYKVPLVKKKSLRQNLIENGLLKDFLAKHNVNPASKYFPTEAATE. The Peptidase A1 domain maps to 75-384; it reads YFGTIGIGTP…DRGNNRVGLA (310 aa). The active site involves Asp93. A disulfide bond links Cys106 and Cys111. Phosphoserine is present on Ser129. A disulfide bridge links Cys267 with Cys271. Residue Asp276 is part of the active site. Residues Cys310 and Cys343 are joined by a disulfide bond.

The protein belongs to the peptidase A1 family.

The protein resides in the secreted. It catalyses the reaction Preferential cleavage: hydrophobic, preferably aromatic, residues in P1 and P1' positions. Cleaves 1-Phe-|-Val-2, 4-Gln-|-His-5, 13-Glu-|-Ala-14, 14-Ala-|-Leu-15, 15-Leu-|-Tyr-16, 16-Tyr-|-Leu-17, 23-Gly-|-Phe-24, 24-Phe-|-Phe-25 and 25-Phe-|-Tyr-26 bonds in the B chain of insulin.. In terms of biological role, shows particularly broad specificity; although bonds involving phenylalanine and leucine are preferred, many others are also cleaved to some extent. The polypeptide is Pepsin A (PGA) (Suncus murinus (Asian house shrew)).